The chain runs to 125 residues: MTIEEIISEIENMSVSQLAELVKALEEKFGVSASMPVAVAAPVAGPAAAAPAEEEKTSFDVILKEAGAKKLEVIKVVREITGLGLKEAKDLVESAPKPIKEGVTKEEAEELKKKLEEAGAVIELQ.

It belongs to the bacterial ribosomal protein bL12 family. Homodimer. Part of the ribosomal stalk of the 50S ribosomal subunit. Forms a multimeric L10(L12)X complex, where L10 forms an elongated spine to which 2 to 4 L12 dimers bind in a sequential fashion. Binds GTP-bound translation factors.

In terms of biological role, forms part of the ribosomal stalk which helps the ribosome interact with GTP-bound translation factors. Is thus essential for accurate translation. In Coprothermobacter proteolyticus (strain ATCC 35245 / DSM 5265 / OCM 4 / BT), this protein is Large ribosomal subunit protein bL12.